Here is a 126-residue protein sequence, read N- to C-terminus: Holo-[acyl-carrier-protein] synthase (126 aa).

Mg(2+) contacts are provided by aspartate 9 and glutamate 58.

Belongs to the P-Pant transferase superfamily. AcpS family. It depends on Mg(2+) as a cofactor.

The protein resides in the cytoplasm. It carries out the reaction apo-[ACP] + CoA = holo-[ACP] + adenosine 3',5'-bisphosphate + H(+). Transfers the 4'-phosphopantetheine moiety from coenzyme A to a Ser of acyl-carrier-protein. This Vibrio parahaemolyticus serotype O3:K6 (strain RIMD 2210633) protein is Holo-[acyl-carrier-protein] synthase.